A 430-amino-acid polypeptide reads, in one-letter code: Adenylosuccinate synthetase (430 aa).

GTP-binding positions include 12 to 18 (GDEGKGK) and 40 to 42 (GHT). Residue aspartate 13 is the Proton acceptor of the active site. The Mg(2+) site is built by aspartate 13 and glycine 40. Residues 13-16 (DEGK), 38-41 (NAGH), threonine 128, arginine 142, glutamine 223, threonine 238, and arginine 302 each bind IMP. Histidine 41 functions as the Proton donor in the catalytic mechanism. Substrate is bound at residue 298 to 304 (TTTGRPR). GTP contacts are provided by residues arginine 304, 330 to 332 (SID), and 412 to 414 (SVG).

This sequence belongs to the adenylosuccinate synthetase family. In terms of assembly, homodimer. Mg(2+) serves as cofactor.

It localises to the cytoplasm. The catalysed reaction is IMP + L-aspartate + GTP = N(6)-(1,2-dicarboxyethyl)-AMP + GDP + phosphate + 2 H(+). It functions in the pathway purine metabolism; AMP biosynthesis via de novo pathway; AMP from IMP: step 1/2. Plays an important role in the de novo pathway of purine nucleotide biosynthesis. Catalyzes the first committed step in the biosynthesis of AMP from IMP. In Streptococcus equi subsp. zooepidemicus (strain H70), this protein is Adenylosuccinate synthetase.